The primary structure comprises 472 residues: Gamma-glutamylputrescine synthetase PuuA (472 aa).

The GS beta-grasp domain occupies 35 to 129 (PNTQYVDVLL…MLLTMVDEDG (95 aa)). Residues 136-472 (PRNVLNRLWQ…TEIEWMLKNA (337 aa)) enclose the GS catalytic domain.

Belongs to the glutamine synthetase family. As to quaternary structure, dodecamer. Mg(2+) serves as cofactor. It depends on Mn(2+) as a cofactor.

It carries out the reaction putrescine + L-glutamate + ATP = gamma-L-glutamylputrescine + ADP + phosphate + H(+). The protein operates within amine and polyamine degradation; putrescine degradation; 4-aminobutanoate from putrescine: step 1/4. Involved in the breakdown of putrescine. Catalyzes the ATP-dependent gamma-glutamylation of putrescine, producing gamma-L-glutamylputrescine. Absolutely essential to utilize putrescine as both nitrogen and carbon sources and to decrease the toxicity of putrescine, which can lead to inhibition of cell growth and protein synthesis. In vitro is also able to use several diamines, and spermidine and spermine, instead of putrescine, but with a much lower activity, and cannot catalyze the gamma-glutamylation of ornithine or GABA. The protein is Gamma-glutamylputrescine synthetase PuuA of Escherichia coli (strain K12).